We begin with the raw amino-acid sequence, 369 residues long: Chanoclavine-I aldehyde reductase fgaOx3 (369 aa).

Residues 23–25, alanine 58, glutamine 100, and histidine 169 each bind FMN; that span reads PMT. Substrate-binding residues include histidine 169 and asparagine 172. The Proton donor role is filled by tyrosine 174. FMN contacts are provided by residues glycine 292, 316–317, and arginine 317; that span reads GR. Residue tyrosine 344 participates in substrate binding.

The protein belongs to the NADH:flavin oxidoreductase/NADH oxidase family. As to quaternary structure, monomer. FMN serves as cofactor.

The catalysed reaction is dihydrochanoclavine-I aldehyde + NADP(+) = chanoclavine-I aldehyde + NADPH + H(+). It participates in alkaloid biosynthesis; ergot alkaloid biosynthesis. In terms of biological role, chanoclavine-I aldehyde reductase; part of the gene cluster that mediates the biosynthesis of isofumigaclavines, fungal ergot alkaloids. The tryptophan dimethylallyltransferase ifgA catalyzes the first step of ergot alkaloid biosynthesis by condensing dimethylallyl diphosphate (DMAP) and tryptophan to form 4-dimethylallyl-L-tryptophan. The second step is catalyzed by the methyltransferase ifgB that methylates 4-dimethylallyl-L-tryptophan in the presence of S-adenosyl-L-methionine, resulting in the formation of N-methyl-dimethylallyl-L-tryptophan. The catalase ifgD and the FAD-dependent oxidoreductase ifgC then transform N-methyl-dimethylallyl-L-tryptophan to chanoclavine-I which is further oxidized by ifgE in the presence of NAD(+), resulting in the formation of chanoclavine-I aldehyde. The chanoclavine-I aldehyde reductases ifgG and/or fgaOx3 reduce chanoclavine-I aldehyde to dihydrochanoclavine-I aldehyde that spontaneously dehydrates to form 6,8-dimethyl-6,7-didehydroergoline. The festuclavine dehydrogenases ifgF1 and/or ifgF2 then catalyze the reduction of 6,8-dimethyl-6,7-didehydroergoline to form festuclavine. Hydrolysis of festuclavine by a yet undetermined cytochrome P450 monooxygenase (called ifgH) then leads to the formation of isofumigaclavine B which is in turn acetylated by ifgI to isofumigaclavine A. Penicillium roqueforti has interestingly at least two sets of genes for the consumption of chanoclavine-I aldehyde on three different loci, the OYEs ifgG/fgaOx3 and the festuclavine synthase homologs ifgF1/ifgF2. The reason for the duplication of these genes is unclear, probably to ensure the conversion of chanoclavine-I aldehyde by differential gene expression under various environmental conditions. The chain is Chanoclavine-I aldehyde reductase fgaOx3 from Penicillium roqueforti (strain FM164).